Reading from the N-terminus, the 238-residue chain is Probable transcriptional regulatory protein HH_1604 (238 aa).

This sequence belongs to the TACO1 family.

It is found in the cytoplasm. The protein is Probable transcriptional regulatory protein HH_1604 of Helicobacter hepaticus (strain ATCC 51449 / 3B1).